A 167-amino-acid polypeptide reads, in one-letter code: Elafin (167 aa).

Positions 1–21 (MRSRSFLVLVVVFLICGTLVA) are cleaved as a signal peptide. Positions 22-70 (QAAGRIRRPKGKGTKKILALVKGQGPVRGKDQVKGQGPVKGQDLGKSQD) are excised as a propeptide. 12 consecutive repeat copies span residues 44 to 49 (GQGPVR), 50 to 55 (GKDQVK), 56 to 61 (GQGPVK), 62 to 67 (GQDLGK), 68 to 73 (SQDPVK), 74 to 79 (AQLPDK), 80 to 85 (GQDLGK), 86 to 91 (GEDSVK), 92 to 97 (GQDPFK), 98 to 103 (AQLPDK), 104 to 109 (LQDPVK), and 110 to 115 (AQPAIK). Residues 44–115 (GQGPVRGKDQ…DPVKAQPAIK (72 aa)) are 12 X 6 AA tandem repeats of [GSAL]-[QEK]-[DGLP]-[APSLQ]-[VGDFI]-[KR]. The interval 46–104 (GPVRGKDQVKGQGPVKGQDLGKSQDPVKAQLPDKGQDLGKGEDSVKGQDPFKAQLPDKL) is disordered. Positions 78 to 126 (DKGQDLGKGEDSVKGQDPFKAQLPDKLQDPVKAQPAIKRLILLTKPGSC) are 2 X tandem repeats of SVP-1 like motif. Over residues 79–91 (KGQDLGKGEDSVK) the composition is skewed to basic and acidic residues. SVP-1 clotting repeat units follow at residues 80–101 (GQDL…AQLP) and 104–126 (LQDP…PGSC). In terms of domain architecture, WAP spans 119 to 167 (LLTKPGSCPRILIRCLMVNPPNRCLSDAQCPGLKKCCEGFCGKACMDPK). Intrachain disulfides connect C126-C155, C133-C159, C142-C154, and C148-C163.

In terms of tissue distribution, trachea and large intestine.

Its function is as follows. Neutrophil and pancreatic elastase-specific inhibitor of skin. It may prevent elastase-mediated tissue proteolysis. This is Elafin from Sus scrofa (Pig).